The primary structure comprises 131 residues: D-ribose pyranase (131 aa).

The Proton donor role is filled by His-20. Residues Asp-28, His-98, and 120–122 each bind substrate; that span reads YAN.

This sequence belongs to the RbsD / FucU family. RbsD subfamily. In terms of assembly, homodecamer.

The protein localises to the cytoplasm. It catalyses the reaction beta-D-ribopyranose = beta-D-ribofuranose. Its pathway is carbohydrate metabolism; D-ribose degradation; D-ribose 5-phosphate from beta-D-ribopyranose: step 1/2. In terms of biological role, catalyzes the interconversion of beta-pyran and beta-furan forms of D-ribose. The polypeptide is D-ribose pyranase (Bacillus cereus (strain 03BB102)).